Consider the following 330-residue polypeptide: Aspartate--ammonia ligase (330 aa).

This sequence belongs to the class-II aminoacyl-tRNA synthetase family. AsnA subfamily.

It localises to the cytoplasm. It carries out the reaction L-aspartate + NH4(+) + ATP = L-asparagine + AMP + diphosphate + H(+). The protein operates within amino-acid biosynthesis; L-asparagine biosynthesis; L-asparagine from L-aspartate (ammonia route): step 1/1. The protein is Aspartate--ammonia ligase of Histophilus somni (strain 2336) (Haemophilus somnus).